The following is a 353-amino-acid chain: Fe(3+) ions import ATP-binding protein FbpC (353 aa).

The region spanning 9 to 239 (VTFQNVRKSF…PASSFIADFM (231 aa)) is the ABC transporter domain. 41–48 (GPSGCGKT) contributes to the ATP binding site.

This sequence belongs to the ABC transporter superfamily. Fe(3+) ion importer (TC 3.A.1.10) family. In terms of assembly, the complex is composed of two ATP-binding proteins (FbpC), two transmembrane proteins (FbpB) and a solute-binding protein (FbpA).

Its subcellular location is the cell inner membrane. It carries out the reaction Fe(3+)(out) + ATP + H2O = Fe(3+)(in) + ADP + phosphate + H(+). Functionally, part of the ABC transporter complex FbpABC involved in Fe(3+) ions import. Responsible for energy coupling to the transport system. This chain is Fe(3+) ions import ATP-binding protein FbpC, found in Rhizobium etli (strain ATCC 51251 / DSM 11541 / JCM 21823 / NBRC 15573 / CFN 42).